The following is a 104-amino-acid chain: SOSS complex subunit C (104 aa).

The protein belongs to the SOSS-C family. In terms of assembly, belongs to the multiprotein complex Integrator. Component of the SOSS complex, composed of SOSS-B (SOSS-B1/NABP2 or SOSS-B2/NABP1), SOSS-A/INTS3 and SOSS-C/INIP.

The protein localises to the nucleus. Functionally, component of the SOSS complex, a multiprotein complex that functions downstream of the MRN complex to promote DNA repair and G2/M checkpoint. The SOSS complex associates with single-stranded DNA at DNA lesions and influences diverse endpoints in the cellular DNA damage response including cell-cycle checkpoint activation, recombinational repair and maintenance of genomic stability. Required for efficient homologous recombination-dependent repair of double-strand breaks (DSBs). This is SOSS complex subunit C (INIP) from Taeniopygia guttata (Zebra finch).